The sequence spans 341 residues: Anthranilate phosphoribosyltransferase (341 aa).

5-phospho-alpha-D-ribose 1-diphosphate contacts are provided by residues Gly-79, 82 to 83 (GD), Thr-87, 89 to 92 (NIST), 107 to 115 (KHGNRAVSS), and Ser-119. Gly-79 is an anthranilate binding site. Ser-91 is a binding site for Mg(2+). Asn-110 contributes to the anthranilate binding site. Arg-165 contacts anthranilate. Residues Asp-224 and Glu-225 each coordinate Mg(2+).

The protein belongs to the anthranilate phosphoribosyltransferase family. In terms of assembly, homodimer. The cofactor is Mg(2+).

It catalyses the reaction N-(5-phospho-beta-D-ribosyl)anthranilate + diphosphate = 5-phospho-alpha-D-ribose 1-diphosphate + anthranilate. It functions in the pathway amino-acid biosynthesis; L-tryptophan biosynthesis; L-tryptophan from chorismate: step 2/5. Its function is as follows. Catalyzes the transfer of the phosphoribosyl group of 5-phosphorylribose-1-pyrophosphate (PRPP) to anthranilate to yield N-(5'-phosphoribosyl)-anthranilate (PRA). This is Anthranilate phosphoribosyltransferase from Bacillus cereus (strain ATCC 14579 / DSM 31 / CCUG 7414 / JCM 2152 / NBRC 15305 / NCIMB 9373 / NCTC 2599 / NRRL B-3711).